We begin with the raw amino-acid sequence, 378 residues long: Beta-1,3-galactosyltransferase 4 (378 aa).

Residues 1 to 8 (MQLRLFRR) lie on the Cytoplasmic side of the membrane. Residues 9 to 19 (LLLAALLLVIV) traverse the membrane as a helical; Signal-anchor for type II membrane protein segment. Topologically, residues 20 to 378 (WTLFGPSGLG…RCRAIAWLQS (359 aa)) are lumenal. N149 is a glycosylation site (N-linked (GlcNAc...) asparagine).

It belongs to the glycosyltransferase 31 family. In terms of tissue distribution, highly expressed in heart, skeletal muscle and pancreas and, to a lesser extent, in brain, placenta, kidney, liver and lung.

The protein resides in the golgi apparatus membrane. The catalysed reaction is a ganglioside GM2 (d18:1(4E)) + UDP-alpha-D-galactose = a ganglioside GM1 (d18:1(4E)) + UDP + H(+). It carries out the reaction a ganglioside GM2 + UDP-alpha-D-galactose = a ganglioside GM1 + UDP + H(+). The enzyme catalyses a ganglioside GD2 (d18:1(4E)) + UDP-alpha-D-galactose = a ganglioside GD1b (d18:1(4E)) + UDP + H(+). It catalyses the reaction a ganglioside GA2 (d18:1(4E)) + UDP-alpha-D-galactose = a ganglioside GA1 (d18:1(4E)) + UDP + H(+). The protein operates within protein modification; protein glycosylation. Involved in GM1/GD1B/GA1 ganglioside biosynthesis. The sequence is that of Beta-1,3-galactosyltransferase 4 from Homo sapiens (Human).